Reading from the N-terminus, the 195-residue chain is CASP-like protein IN26 (195 aa).

At 1-26 the chain is on the cytoplasmic side; it reads VAPTGSVETEKAGPSYKPKEYYKVTE. The chain crosses the membrane as a helical span at residues 27-47; it reads AILRLLLLASLVVAVVVMVTS. At 48 to 75 the chain is on the extracellular side; it reads KETELISVKLDPFPPFMLPLTAKFTQSP. The helical transmembrane segment at 76–96 threads the bilayer; sequence AFIYFVAGLSVAGLYTIISTL. The Cytoplasmic portion of the chain corresponds to 97-120; that stretch reads ASFYNLLIKPGFCPALVSHFIILD. Residues 121–143 traverse the membrane as a helical segment; sequence VVMLGIVGTATGAAGGVAYIGLK. The Extracellular portion of the chain corresponds to 144 to 163; the sequence is GNSHVGWTKVCNKYGKLCTH. Residues 164-184 traverse the membrane as a helical segment; it reads LGASLAVSFFAFIVLLLLIIL. Residues 185-195 lie on the Cytoplasmic side of the membrane; it reads SIHSLSKKIPK.

Belongs to the Casparian strip membrane proteins (CASP) family. As to quaternary structure, homodimer and heterodimers.

It is found in the cell membrane. The polypeptide is CASP-like protein IN26 (IN26) (Ipomoea nil (Japanese morning glory)).